The following is an 849-amino-acid chain: Disks large homolog 3 (849 aa).

A disordered region spans residues 32 to 101 (DWQVPDPYGP…GKNTPKLNGS (70 aa)). The segment covering 41 to 53 (PSGGNGASSGYGG) has biased composition (gly residues). Residues 57-69 (QTLPSQAGATPTP) show a composition bias toward polar residues. PDZ domains are found at residues 149 to 235 (EIVL…VRRR), 244 to 330 (EVNL…VAKP), and 404 to 484 (KIIL…AQYR). Ser157 carries the phosphoserine modification. In terms of domain architecture, SH3 spans 519–589 (KRSLYVRALF…PSKKRVEKKE (71 aa)). Residues 659-834 (ARPVIILGPM…IYNKIKQIIE (176 aa)) form the Guanylate kinase-like domain. Tyr705 carries the post-translational modification Phosphotyrosine.

It belongs to the MAGUK family. Interacts through its PDZ domains with NETO1 and APC. Interacts through its first two PDZ domains with ERBB4. Interacts through its third PDZ domain with NLGN1, and probably with NLGN2 and NLGN3. Interacts through its PDZ domains with GRIN2B and SYNGAP1. Interacts through its guanylate kinase-like domain with DLGAP1, DLGAP2, DLGAP3 and DLGAP4. Interacts with FRMPD4 (via C-terminus). Interacts with LRFN2. Interacts with LRFN1 and LRFN4. Interacts with FLTP. Interacts with DGKI (via PDZ-binding motif).

Functionally, required for learning most likely through its role in synaptic plasticity following NMDA receptor signaling. This Rattus norvegicus (Rat) protein is Disks large homolog 3 (Dlg3).